The chain runs to 377 residues: Polar flagellin F (377 aa).

Coiled coils occupy residues Gln98 to Ser131 and Asp302 to Thr339.

It belongs to the bacterial flagellin family. Heteromer of multiple flagellin subunits including FlaA, FlaB/D, FlaC, FlaE and FlaF.

The protein localises to the secreted. The protein resides in the bacterial flagellum. Functionally, flagellin is the subunit protein which polymerizes to form the filaments of bacterial flagella. The sequence is that of Polar flagellin F (flaF) from Vibrio parahaemolyticus serotype O3:K6 (strain RIMD 2210633).